The following is a 215-amino-acid chain: Wtf element wtf7 (215 aa).

The interval 1 to 21 (MSGSYAPIEDSADELSVHSGN) is disordered. A run of 3 helical transmembrane segments spans residues 119–139 (LAQS…CLFF), 149–169 (LMGW…SFIL), and 189–209 (LILF…YALY).

It belongs to the WTF family.

It is found in the spore membrane. Its function is as follows. May act in meiotic drive. This Schizosaccharomyces pombe (strain 972 / ATCC 24843) (Fission yeast) protein is Wtf element wtf7.